We begin with the raw amino-acid sequence, 259 residues long: MGSLSSRGKTSSPSPSSSGPDQEPVSMQPERHKVTAVALGSFPAGEQARLSLRLGEPLTIISEDGDWWTVQSEVSGREYHMPSVYVAKVAHGWLYEGLSREKAEELLLLPGNPGGAFLIRESQTRRGCYSLSVRLSRPASWDRIRHYRIQRLDNGWLYISPRLTFPSLHALVEHYSELADGICCPLREPCVLQKLGPLPGKDTPPPVTVPTSSLNWKKLDRSLLFLEAPASGEASLLSEGLRESLSSYISLAEDPLDDA.

Positions 1–20 (MGSLSSRGKTSSPSPSSSGP) are enriched in low complexity. The disordered stretch occupies residues 1-30 (MGSLSSRGKTSSPSPSSSGPDQEPVSMQPE). Glycine 2 carries the N-myristoyl glycine lipid modification. Positions 31 to 91 (RHKVTAVALG…PSVYVAKVAH (61 aa)) constitute an SH3 domain. The SH2 domain occupies 93–190 (WLYEGLSREK…GICCPLREPC (98 aa)). The tract at residues 190–259 (CVLQKLGPLP…SLAEDPLDDA (70 aa)) is SLA C-terminal.

In terms of assembly, interacts (via its C-terminal domain) with CBL (phosphorylated). Interacts (via SH2 domain) with ZAP70 (phosphorylated) and CD3Z (phosphorylated). Interacts (via SH2 domain) with CSF1R (phosphorylated). In terms of processing, phosphorylated by CSF1R. Mainly expressed in immune system. Highly expressed in spleen and thymus and expressed at intermediate levels in lung. Not expressed in liver, heart and brain. Isoform 1 is predominant in lung and spleen, while isoform 2 is predominant in thymus.

It is found in the cytoplasm. The protein localises to the cell membrane. Its subcellular location is the cytoplasmic vesicle. It localises to the late endosome. In terms of biological role, adapter protein, which negatively regulates T-cell receptor (TCR) signaling. Inhibits T-cell antigen-receptor induced activation of nuclear factor of activated T-cells. May act by linking signaling proteins such as ZAP70 with CBL, leading to a CBL dependent degradation of signaling proteins. The sequence is that of Src-like-adapter 2 (Sla2) from Mus musculus (Mouse).